A 216-amino-acid polypeptide reads, in one-letter code: Probable nicotinate-nucleotide adenylyltransferase (216 aa).

The protein belongs to the NadD family.

The catalysed reaction is nicotinate beta-D-ribonucleotide + ATP + H(+) = deamido-NAD(+) + diphosphate. The protein operates within cofactor biosynthesis; NAD(+) biosynthesis; deamido-NAD(+) from nicotinate D-ribonucleotide: step 1/1. In terms of biological role, catalyzes the reversible adenylation of nicotinate mononucleotide (NaMN) to nicotinic acid adenine dinucleotide (NaAD). In Pelobacter propionicus (strain DSM 2379 / NBRC 103807 / OttBd1), this protein is Probable nicotinate-nucleotide adenylyltransferase.